We begin with the raw amino-acid sequence, 66 residues long: Beta-toxin Css6 (66 aa).

The 66-residue stretch at 1–66 (KEGYLVNSYT…VWPLPNKTCN (66 aa)) folds into the LCN-type CS-alpha/beta domain. Cystine bridges form between Cys-12/Cys-65, Cys-16/Cys-41, Cys-25/Cys-46, and Cys-29/Cys-48. At Asn-66 the chain carries Asparagine amide.

The protein belongs to the long (4 C-C) scorpion toxin superfamily. Sodium channel inhibitor family. Beta subfamily. In terms of tissue distribution, expressed by the venom gland.

It is found in the secreted. Beta toxins bind voltage-independently at site-4 of sodium channels (Nav) and shift the voltage of activation toward more negative potentials thereby affecting sodium channel activation and promoting spontaneous and repetitive firing. This is Beta-toxin Css6 from Centruroides suffusus (Durango bark scorpion).